We begin with the raw amino-acid sequence, 111 residues long: Large ribosomal subunit protein P2 (111 aa).

Residues 63–84 are compositionally biased toward low complexity; that stretch reads ASMPTGGAPAAAAGGAATAPAA. The segment at 63–111 is disordered; the sequence is ASMPTGGAPAAAAGGAATAPAAEAKEAKKEEKKEESEEEDEDMGFGLFD. Basic and acidic residues predominate over residues 85 to 97; sequence EAKEAKKEEKKEE. Ser-98 is modified (phosphoserine).

In terms of assembly, part of the ribosomal stalk of the large ribosomal subunit; P1 and P2 exist as dimers which assemble on the P0 scaffold.

Its function is as follows. Plays an important role in the elongation step of protein synthesis. This chain is Large ribosomal subunit protein P2, found in Artemia salina (Brine shrimp).